The sequence spans 240 residues: Transmembrane emp24 domain-containing protein 6 (240 aa).

The first 21 residues, Met-1 to Ser-21, serve as a signal peptide directing secretion. The Lumenal portion of the chain corresponds to Gln-22–Tyr-200. In terms of domain architecture, GOLD spans Thr-53–Val-138. N-linked (GlcNAc...) asparagine glycans are attached at residues Asn-107 and Asn-156. The chain crosses the membrane as a helical span at residues Val-201–Leu-223. The Cytoplasmic segment spans residues Lys-224–Cys-240.

The protein belongs to the EMP24/GP25L family.

It is found in the endoplasmic reticulum membrane. The chain is Transmembrane emp24 domain-containing protein 6 (TMED6) from Bos taurus (Bovine).